A 363-amino-acid chain; its full sequence is Spermatogenesis-associated protein 22 (363 aa).

Polar residues-rich tracts occupy residues Met-1–Ser-12, Gln-30–Asp-48, Ile-98–Gly-108, and Asn-140–Gln-157. Disordered regions lie at residues Met-1 to Asp-51, Ile-98 to Asp-127, and Asn-140 to Lys-170.

As to quaternary structure, component of a multiprotein complex with MEIOB and RPA2. Interacts with MEIOB. Interacts with the complex BRME1:HSF2BP:BRCA2. In terms of tissue distribution, highly expressed in adult testis.

Its subcellular location is the chromosome. Meiosis-specific protein required for homologous recombination in meiosis I. This Homo sapiens (Human) protein is Spermatogenesis-associated protein 22.